The following is a 471-amino-acid chain: 1,3-beta-glucanosyltransferase GAS4 (471 aa).

An N-terminal signal peptide occupies residues Met-1–Ala-21. A disulfide bridge connects residues Cys-70 and Cys-99. (1,3-beta-D-glucosyl)n is bound at residue Tyr-88. A glycan (N-linked (GlcNAc...) asparagine) is linked at Asn-151. Residues Asn-160, Glu-161, Asp-203, and Arg-208 each coordinate (1,3-beta-D-glucosyl)n. Residue Glu-161 is the Proton donor of the active site. 2 disulfide bridges follow: Cys-217/Cys-354 and Cys-238/Cys-269. Glu-266 acts as the Nucleophile in catalysis. Residue Tyr-298 participates in (1,3-beta-D-glucosyl)n binding. Asn-398 is a glycosylation site (N-linked (GlcNAc...) asparagine). The GPI-anchor amidated asparagine moiety is linked to residue Asn-447. Positions Ser-448 to Phe-471 are cleaved as a propeptide — removed in mature form.

This sequence belongs to the glycosyl hydrolase 72 family.

It localises to the cell membrane. Functionally, splits internally a 1,3-beta-glucan molecule and transfers the newly generated reducing end (the donor) to the non-reducing end of another 1,3-beta-glucan molecule (the acceptor) forming a 1,3-beta linkage, resulting in the elongation of 1,3-beta-glucan chains in the cell wall. Involved in spore wall assembly. The sequence is that of 1,3-beta-glucanosyltransferase GAS4 (GAS4) from Saccharomyces cerevisiae (strain ATCC 204508 / S288c) (Baker's yeast).